We begin with the raw amino-acid sequence, 311 residues long: Oxygen-dependent coproporphyrinogen-III oxidase (311 aa).

Ser100 lines the substrate pocket. Residues His104 and His114 each contribute to the a divalent metal cation site. The active-site Proton donor is the His114. 116–118 serves as a coordination point for substrate; it reads NVR. A divalent metal cation contacts are provided by His153 and His183. The important for dimerization stretch occupies residues 248–283; the sequence is YAEFNLVYDRGTLFGLQSGGRTESILMSLPPIVHWE. 266 to 268 contributes to the substrate binding site; the sequence is GGR.

It belongs to the aerobic coproporphyrinogen-III oxidase family. In terms of assembly, homodimer. A divalent metal cation is required as a cofactor.

It is found in the cytoplasm. The catalysed reaction is coproporphyrinogen III + O2 + 2 H(+) = protoporphyrinogen IX + 2 CO2 + 2 H2O. The protein operates within porphyrin-containing compound metabolism; protoporphyrin-IX biosynthesis; protoporphyrinogen-IX from coproporphyrinogen-III (O2 route): step 1/1. Its function is as follows. Involved in the heme biosynthesis. Catalyzes the aerobic oxidative decarboxylation of propionate groups of rings A and B of coproporphyrinogen-III to yield the vinyl groups in protoporphyrinogen-IX. The polypeptide is Oxygen-dependent coproporphyrinogen-III oxidase (Legionella pneumophila (strain Corby)).